Consider the following 274-residue polypeptide: Hematopoietically-expressed homeobox protein hhex (274 aa).

The homeobox DNA-binding region spans 139-198; the sequence is RKGGQVRFSNDQTIELEKKFETQKYLSPPERKRLAKMLQLSERQVKTWFQNRRAKWRRLK. The interval 197-274 is disordered; that stretch reads LKQENPQGNK…GDKGFYNCAH (78 aa). Polar residues predominate over residues 237–248; that stretch reads DEPTSSPTSQET. The segment covering 249–263 has biased composition (acidic residues); that stretch reads LDSEVSDDSDQEVDI.

In terms of tissue distribution, expressed in the most dorsoanterior endomesoderm of the blastula and gastrula embryo, and later is restricted to the forming liver diverticulum.

The protein resides in the nucleus. In terms of biological role, recognizes the DNA sequence 5'-ATTAA-3'. Transcriptional repressor. Regulates the differentiation of both endothelial and blood cells. Probably plays a role in the proliferation of vascular endothelial cells during blood vessel development. Establishes anterior identity at two levels; acts early to enhance canonical wnt-signaling by repressing expression of tle4, and acts later to inhibit nodal-signaling by directly targeting nodal/nr1 and nodal2/nr2. May play a role in liver development. Induces heart development. The protein is Hematopoietically-expressed homeobox protein hhex of Xenopus tropicalis (Western clawed frog).